Consider the following 198-residue polypeptide: Transcription factor IND (198 aa).

The tract at residues 1–33 (MENGMYKKKGVCDSCVSSKSRSNHSPKRSMMEP) is disordered. The region spanning 118-167 (ISDDPQTVVARRRRERISEKIRILKRIVPGGAKMDTASMLDEAIRYTKFL) is the bHLH domain.

In terms of assembly, homodimer. Heterodimer; possibly with ALC. After fertilization, it is expressed in stripes about four cells wide at the margins of developing wild-type fruit. Also expressed in the inner valve layer, which becomes lignified later in fruit development. Detected in roots.

Its subcellular location is the nucleus. Functionally, transcription regulator required for seed dispersal. Involved in the differentiation of all three cell types required for fruit dehiscence. Acts as the key regulator in a network including SHP and ALC that controls specification of the valve margin. Works with ALC, SHP, and FUL to allow differentiation of the lignified valve layer, the spring-loaded mechanism of fruit that promotes opening. Regulates the expression of the YJ80 marker. The chain is Transcription factor IND (IND) from Arabidopsis thaliana (Mouse-ear cress).